Consider the following 77-residue polypeptide: U18-lycotoxin-Ls1a (77 aa).

The N-terminal stretch at 1-22 (MSPKMQALLLLLGLITLLVVHA) is a signal peptide. Positions 23–34 (EEELSENTESER) are excised as a propeptide. Intrachain disulfides connect Cys36/Cys51, Cys43/Cys56, Cys50/Cys67, and Cys58/Cys65.

The protein belongs to the neurotoxin 02 (plectoxin) family. In terms of tissue distribution, expressed by the venom gland.

It is found in the secreted. The chain is U18-lycotoxin-Ls1a from Lycosa singoriensis (Wolf spider).